A 265-amino-acid chain; its full sequence is Transcription factor LBX1b (265 aa).

A DNA-binding region (homeobox) is located at residues 121 to 180 (RRKSRTAFTNHQLYELEKRFLHQKYLSPADRDQIAHQLGLTNAQVITWFQNRRAKLKRDL).

It localises to the nucleus. Its function is as follows. Transcription factor required for the development of hypaxial muscles. In Danio rerio (Zebrafish), this protein is Transcription factor LBX1b.